Consider the following 688-residue polypeptide: DNA ligase (688 aa).

Residues 51–55, 100–101, and E129 each bind NAD(+); these read DSEYD and SL. Residue K131 is the N6-AMP-lysine intermediate of the active site. R152, E189, K308, and K332 together coordinate NAD(+). Zn(2+) is bound by residues C426, C429, C444, and C450. The 80-residue stretch at 609–688 folds into the BRCT domain; it reads ADEQPLKGQT…DELLALLANS (80 aa).

This sequence belongs to the NAD-dependent DNA ligase family. LigA subfamily. Requires Mg(2+) as cofactor. The cofactor is Mn(2+).

It catalyses the reaction NAD(+) + (deoxyribonucleotide)n-3'-hydroxyl + 5'-phospho-(deoxyribonucleotide)m = (deoxyribonucleotide)n+m + AMP + beta-nicotinamide D-nucleotide.. DNA ligase that catalyzes the formation of phosphodiester linkages between 5'-phosphoryl and 3'-hydroxyl groups in double-stranded DNA using NAD as a coenzyme and as the energy source for the reaction. It is essential for DNA replication and repair of damaged DNA. This Shewanella sp. (strain MR-4) protein is DNA ligase.